The chain runs to 197 residues: Small ribosomal subunit protein uS4B (197 aa).

The S4 RNA-binding domain occupies 88-153 (CRLDNMVYRM…IEKYLSNLKN (66 aa)).

The protein belongs to the universal ribosomal protein uS4 family. Part of the 30S ribosomal subunit. Contacts protein S5. The interaction surface between S4 and S5 is involved in control of translational fidelity.

Its function is as follows. One of the primary rRNA binding proteins, it binds directly to 16S rRNA where it nucleates assembly of the body of the 30S subunit. With S5 and S12 plays an important role in translational accuracy. The polypeptide is Small ribosomal subunit protein uS4B (Alkaliphilus oremlandii (strain OhILAs) (Clostridium oremlandii (strain OhILAs))).